Here is a 409-residue protein sequence, read N- to C-terminus: Nucleoprotein (409 aa).

Disordered regions lie at residues Met-1–Asn-32, Leu-44–Gly-69, Ala-121–Asp-194, and Val-238–Asn-259. The RNA-binding stretch occupies residues Ser-29–Leu-160. Residues Gly-31–Asp-156 enclose the CoV N NTD domain. Over residues Arg-162–Pro-179 the composition is skewed to low complexity. Basic and acidic residues-rich tracts occupy residues Pro-180–Ser-192 and Lys-247–Asn-259. Phosphoserine; by host occurs at positions 190 and 192. The region spanning Thr-215–Pro-331 is the CoV N CTD domain. The segment at Arg-226–Asp-333 is dimerization. An intrachain disulfide couples Cys-320 to Cys-323. The interval Gly-326 to Leu-409 is disordered. The span at Arg-341–Arg-356 shows a compositional bias: low complexity. Over residues Gln-358–Lys-367 the composition is skewed to basic residues. Residues Lys-368 to Asn-384 show a composition bias toward basic and acidic residues. Thr-378 is subject to Phosphothreonine; by host. Ser-379 carries the phosphoserine; by host modification.

The protein belongs to the gammacoronavirus nucleocapsid protein family. Homooligomer. Both monomeric and oligomeric forms interact with RNA. Interacts with protein M. Interacts with NSP3; this interaction serves to tether the genome to the newly translated replicase-transcriptase complex at a very early stage of infection. Post-translationally, ADP-ribosylated. The ADP-ribosylation is retained in the virion during infection. In terms of processing, phosphorylated on serine and threonine residues.

It is found in the virion. The protein resides in the host endoplasmic reticulum-Golgi intermediate compartment. Its subcellular location is the host Golgi apparatus. Packages the positive strand viral genome RNA into a helical ribonucleocapsid (RNP) and plays a fundamental role during virion assembly through its interactions with the viral genome and membrane protein M. Plays an important role in enhancing the efficiency of subgenomic viral RNA transcription as well as viral replication. In Gallus gallus (Chicken), this protein is Nucleoprotein.